Reading from the N-terminus, the 156-residue chain is MIP18 family protein galla-2 (156 aa).

It belongs to the MIP18 family. Component of the CGX complex composed of crb, galla (galla-1 or galla-2) and Xpd. Interacts with crb (via intracellular domain). Also able to interact with Xpd in the absence of crb. Interacts with Mms19.

Its function is as follows. Component of the crb-galla-Xpd (CGX) complex which is essential for proper mitotic chromosome segregation in early embryos. The CGX complex is also required for cell proliferation in developing wing disks. In the CGX complex, acts with crb to recruit Xpd thus forming the functional complex. The protein is MIP18 family protein galla-2 of Drosophila melanogaster (Fruit fly).